The following is a 635-amino-acid chain: Cationic amino acid transporter 4 (635 aa).

3 helical membrane passes run 42–62 (LTLL…TGTV), 66–86 (MAGP…LLAA), and 113–133 (IWAF…GAAV). Residues Asn146, Asn151, and Asn195 are each glycosylated (N-linked (GlcNAc...) asparagine). Residues 197–217 (TFSAISLIVILFIIVLGFILA) traverse the membrane as a helical segment. Residue Asn221 is glycosylated (N-linked (GlcNAc...) asparagine). A run of 5 helical transmembrane segments spans residues 229–249 (FAPF…YAFV), 270–290 (MAIA…STVL), 318–338 (GFIV…SNLF), 365–385 (QVPV…ALLL), and 391–411 (VQFL…SIIV). Residues Ser422 and Ser427 each carry the phosphoserine modification. The next 4 membrane-spanning stretches (helical) occupy residues 478-498 (VAWA…VLVF), 508-528 (WGYV…LLVL), 539-559 (TFQI…NTCL), and 567-587 (TWLR…GYGI).

The protein belongs to the amino acid-polyamine-organocation (APC) superfamily. Cationic amino acid transporter (CAT) (TC 2.A.3.3) family.

Its subcellular location is the membrane. Involved in the transport of the cationic amino acids (arginine, lysine and ornithine). This Mus musculus (Mouse) protein is Cationic amino acid transporter 4 (Slc7a4).